Consider the following 263-residue polypeptide: Glucosamine-6-phosphate deaminase 2 (263 aa).

Aspartate 82 functions as the Proton acceptor; for enolization step in the catalytic mechanism. Catalysis depends on asparagine 151, which acts as the For ring-opening step. Histidine 153 acts as the Proton acceptor; for ring-opening step in catalysis. The For ring-opening step role is filled by glutamate 158.

It belongs to the glucosamine/galactosamine-6-phosphate isomerase family. In terms of assembly, homohexamer.

The catalysed reaction is alpha-D-glucosamine 6-phosphate + H2O = beta-D-fructose 6-phosphate + NH4(+). Catalyzes the reversible conversion of alpha-D-glucosamine 6-phosphate (GlcN-6P) into beta-D-fructose 6-phosphate (Fru-6P) and ammonium ion, a regulatory reaction step in de novo uridine diphosphate-N-acetyl-alpha-D-glucosamine (UDP-GlcNAc) biosynthesis via hexosamine pathway. In Giardia intestinalis (Giardia lamblia), this protein is Glucosamine-6-phosphate deaminase 2 (GPI2).